A 249-amino-acid polypeptide reads, in one-letter code: Ubiquinone biosynthesis O-methyltransferase (249 aa).

Residues R41, G72, D93, and M136 each contribute to the S-adenosyl-L-methionine site.

Belongs to the methyltransferase superfamily. UbiG/COQ3 family.

The catalysed reaction is a 3-demethylubiquinol + S-adenosyl-L-methionine = a ubiquinol + S-adenosyl-L-homocysteine + H(+). The enzyme catalyses a 3-(all-trans-polyprenyl)benzene-1,2-diol + S-adenosyl-L-methionine = a 2-methoxy-6-(all-trans-polyprenyl)phenol + S-adenosyl-L-homocysteine + H(+). The protein operates within cofactor biosynthesis; ubiquinone biosynthesis. Functionally, O-methyltransferase that catalyzes the 2 O-methylation steps in the ubiquinone biosynthetic pathway. The chain is Ubiquinone biosynthesis O-methyltransferase from Mesorhizobium japonicum (strain LMG 29417 / CECT 9101 / MAFF 303099) (Mesorhizobium loti (strain MAFF 303099)).